Here is a 163-residue protein sequence, read N- to C-terminus: Globin CTT-V (163 aa).

Residues 1–16 (MKFFAVLTLCIIGAIA) form the signal peptide. Positions 18–163 (PLTSDEANLV…YTVAFEVIPA (146 aa)) constitute a Globin domain. Heme b is bound by residues histidine 76 and histidine 111.

The protein belongs to the globin family.

This Chironomus thummi piger (Midge) protein is Globin CTT-V (CTT-V).